The following is a 711-amino-acid chain: DNA ligase (711 aa).

A disordered region spans residues 1-29 (MSEDAIGQQVPAAQEAAAGAEPNSAARER). Residues 12–25 (AAQEAAAGAEPNSA) show a composition bias toward low complexity. NAD(+) is bound by residues 54–58 (DAAFD), 103–104 (SL), and E133. K135 (N6-AMP-lysine intermediate) is an active-site residue. Positions 156, 197, 313, and 337 each coordinate NAD(+). Zn(2+) contacts are provided by C431, C434, C450, and C456. The 90-residue stretch at 620–709 (QGPRPLEGVT…PEAARAVARV (90 aa)) folds into the BRCT domain.

It belongs to the NAD-dependent DNA ligase family. LigA subfamily. It depends on Mg(2+) as a cofactor. Requires Mn(2+) as cofactor.

The catalysed reaction is NAD(+) + (deoxyribonucleotide)n-3'-hydroxyl + 5'-phospho-(deoxyribonucleotide)m = (deoxyribonucleotide)n+m + AMP + beta-nicotinamide D-nucleotide.. Functionally, DNA ligase that catalyzes the formation of phosphodiester linkages between 5'-phosphoryl and 3'-hydroxyl groups in double-stranded DNA using NAD as a coenzyme and as the energy source for the reaction. It is essential for DNA replication and repair of damaged DNA. In Salinispora tropica (strain ATCC BAA-916 / DSM 44818 / JCM 13857 / NBRC 105044 / CNB-440), this protein is DNA ligase.